Reading from the N-terminus, the 415-residue chain is tRNA(Ile)-lysidine synthase (415 aa).

An ATP-binding site is contributed by 36-41 (SGGRDS).

It belongs to the tRNA(Ile)-lysidine synthase family.

It is found in the cytoplasm. It carries out the reaction cytidine(34) in tRNA(Ile2) + L-lysine + ATP = lysidine(34) in tRNA(Ile2) + AMP + diphosphate + H(+). Functionally, ligates lysine onto the cytidine present at position 34 of the AUA codon-specific tRNA(Ile) that contains the anticodon CAU, in an ATP-dependent manner. Cytidine is converted to lysidine, thus changing the amino acid specificity of the tRNA from methionine to isoleucine. The protein is tRNA(Ile)-lysidine synthase of Tropheryma whipplei (strain Twist) (Whipple's bacillus).